We begin with the raw amino-acid sequence, 329 residues long: MWVFKFLLLPVVSFALSPEETLDTQWELWKKTHGKQYNSKVDEISRRLIWEKNLKKISVHNLEASLGAHTYELAMNHLGDMTSEEVVQKMTGLRVPPSRSFSNDTLYTPEWEGRVPDSIDYRKKGYVTPVKNQGQCGSCWAFSSAGALEGQLKKKTGKLLALSPQNLVDCVSENYGCGGGYMTTAFQYVQQNGGIDSEDAYPYVGQDESCMYNATAKAAKCRGYREIPVGNEKALKRAVARVGPVSVSIDASLTSFQFYSRGVYYDENCDRDNVNHAVLVVGYGTQKGNKYWIIKNSWGESWGNKGYVLLARNKNNACGITNLASFPKM.

An N-terminal signal peptide occupies residues 1–15 (MWVFKFLLLPVVSFA). A propeptide spans 16–114 (LSPEETLDTQ…TLYTPEWEGR (99 aa)) (activation peptide). N-linked (GlcNAc...) asparagine glycosylation is present at N103. 2 disulfides stabilise this stretch: C136–C177 and C170–C210. Residue C139 is part of the active site. An N-linked (GlcNAc...) asparagine glycan is attached at N213. A disulfide bridge connects residues C269 and C318. Residues H276 and N296 contribute to the active site.

Belongs to the peptidase C1 family.

The protein resides in the lysosome. Its subcellular location is the secreted. The protein localises to the apical cell membrane. The enzyme catalyses Broad proteolytic activity. With small-molecule substrates and inhibitors, the major determinant of specificity is P2, which is preferably Leu, Met &gt; Phe, and not Arg.. Functionally, thiol protease involved in osteoclastic bone resorption and may participate partially in the disorder of bone remodeling. Displays potent endoprotease activity against fibrinogen at acid pH. May play an important role in extracellular matrix degradation. Involved in the release of thyroid hormone thyroxine (T4) by limited proteolysis of TG/thyroglobulin in the thyroid follicle lumen. The sequence is that of Cathepsin K (Ctsk) from Rattus norvegicus (Rat).